A 225-amino-acid polypeptide reads, in one-letter code: ATP-dependent dethiobiotin synthetase BioD (225 aa).

13 to 18 is an ATP binding site; it reads NVGKTL. Position 17 (Thr17) interacts with Mg(2+). Residue Lys38 is part of the active site. Thr42 contributes to the substrate binding site. ATP is bound by residues Asp55, 116–119, 176–177, and 205–207; these read EGAG, NH, and PWL. The Mg(2+) site is built by Asp55 and Glu116.

It belongs to the dethiobiotin synthetase family. As to quaternary structure, homodimer. Mg(2+) is required as a cofactor.

The protein resides in the cytoplasm. The enzyme catalyses (7R,8S)-7,8-diammoniononanoate + CO2 + ATP = (4R,5S)-dethiobiotin + ADP + phosphate + 3 H(+). Its pathway is cofactor biosynthesis; biotin biosynthesis; biotin from 7,8-diaminononanoate: step 1/2. Its function is as follows. Catalyzes a mechanistically unusual reaction, the ATP-dependent insertion of CO2 between the N7 and N8 nitrogen atoms of 7,8-diaminopelargonic acid (DAPA, also called 7,8-diammoniononanoate) to form a ureido ring. This Baumannia cicadellinicola subsp. Homalodisca coagulata protein is ATP-dependent dethiobiotin synthetase BioD.